The sequence spans 431 residues: Keratin, type I cytoskeletal 40 (431 aa).

A head region spans residues 1–89 (MTSDCSSTHC…CEDGVFTSNE (89 aa)). One can recognise an IF rod domain in the interval 89-400 (EKETMQFLND…GLLDSEDSRL (312 aa)). Residues 90 to 124 (KETMQFLNDRLASYLEKVRSLEETNAELESRIQEQ) form a coil 1A region. The linker 1 stretch occupies residues 125 to 135 (CEQDIPMVCPD). The interval 136–236 (YQRYFNTIED…HEEEVNLLRE (101 aa)) is coil 1B. Residues 237–252 (QLGDRLSVELDTAPTL) form a linker 12 region. Residues 253-396 (DLNRVLDEMR…NTYWGLLDSE (144 aa)) form a coil 2 region. The interval 397–431 (DSRLSCSPCSTTCTSSNTCEPCSAYVICTVENCCL) is tail.

Belongs to the intermediate filament family. Heterotetramer of two type I and two type II keratins. In terms of tissue distribution, expressed in skin and scalp. Also very weakly expressed in tongue, breast, colon and small intestine. In the hair follicle, it is specifically present in the upper hair cuticle. Not present in the upper cortex (at protein level).

Its function is as follows. May play a role in late hair differentiation. In Homo sapiens (Human), this protein is Keratin, type I cytoskeletal 40 (KRT40).